Reading from the N-terminus, the 140-residue chain is D-ribose pyranase (140 aa).

The active-site Proton donor is the His-20. Substrate-binding positions include Asp-28, His-99, and 121–123 (YSS).

It belongs to the RbsD / FucU family. RbsD subfamily. As to quaternary structure, homodecamer.

The protein localises to the cytoplasm. It catalyses the reaction beta-D-ribopyranose = beta-D-ribofuranose. Its pathway is carbohydrate metabolism; D-ribose degradation; D-ribose 5-phosphate from beta-D-ribopyranose: step 1/2. Catalyzes the interconversion of beta-pyran and beta-furan forms of D-ribose. The protein is D-ribose pyranase of Pseudothermotoga lettingae (strain ATCC BAA-301 / DSM 14385 / NBRC 107922 / TMO) (Thermotoga lettingae).